The chain runs to 747 residues: Eukaryotic translation initiation factor 3 subunit B (747 aa).

The RRM domain maps to 42-128; the sequence is AFVVVDGLPE…HTLRVNKLTD (87 aa). 5 WD repeats span residues 195–234, 236–292, 310–349, 520–563, and 578–623; these read DRQH…RQRR, AHPF…PLRS, APKF…LLDK, LEKK…EKPE, and ADHY…LREE.

The protein belongs to the eIF-3 subunit B family. Component of the eukaryotic translation initiation factor 3 (eIF-3) complex.

The protein localises to the cytoplasm. Functionally, RNA-binding component of the eukaryotic translation initiation factor 3 (eIF-3) complex, which is involved in protein synthesis of a specialized repertoire of mRNAs and, together with other initiation factors, stimulates binding of mRNA and methionyl-tRNAi to the 40S ribosome. The eIF-3 complex specifically targets and initiates translation of a subset of mRNAs involved in cell proliferation. The protein is Eukaryotic translation initiation factor 3 subunit B (prt-1) of Neurospora crassa (strain ATCC 24698 / 74-OR23-1A / CBS 708.71 / DSM 1257 / FGSC 987).